The following is a 427-amino-acid chain: Trigger factor (427 aa).

In terms of domain architecture, PPIase FKBP-type spans 163–248 (GDTVVIDFVG…IHEVKTKEVP (86 aa)).

It belongs to the FKBP-type PPIase family. Tig subfamily.

Its subcellular location is the cytoplasm. It catalyses the reaction [protein]-peptidylproline (omega=180) = [protein]-peptidylproline (omega=0). Its function is as follows. Involved in protein export. Acts as a chaperone by maintaining the newly synthesized protein in an open conformation. Functions as a peptidyl-prolyl cis-trans isomerase. The sequence is that of Trigger factor from Streptococcus pyogenes serotype M18 (strain MGAS8232).